We begin with the raw amino-acid sequence, 191 residues long: Signal peptidase IB (191 aa).

At 1–7 (MKKEILE) the chain is on the cytoplasmic side. A helical transmembrane segment spans residues 8 to 28 (WIISIAVAFVILFIVGKFIVT). Residues 29–191 (PYTIKGESMD…HNFNPENTKN (163 aa)) lie on the Extracellular side of the membrane. Residues Ser-36 and Lys-77 contribute to the active site.

It belongs to the peptidase S26 family.

Its subcellular location is the cell membrane. It carries out the reaction Cleavage of hydrophobic, N-terminal signal or leader sequences from secreted and periplasmic proteins.. Functionally, essential for cell viability. In Staphylococcus aureus (strain COL), this protein is Signal peptidase IB (spsB).